The chain runs to 285 residues: Acetyl-coenzyme A carboxylase carboxyl transferase subunit beta (285 aa).

Positions 29 to 285 (IMTKCPKCKK…ILKIHQEVSN (257 aa)) constitute a CoA carboxyltransferase N-terminal domain. Positions 33, 36, 52, and 55 each coordinate Zn(2+). Residues 33–55 (CPKCKKIMYTKELNENLNVCFNC) form a C4-type zinc finger.

Belongs to the AccD/PCCB family. As to quaternary structure, acetyl-CoA carboxylase is a heterohexamer composed of biotin carboxyl carrier protein (AccB), biotin carboxylase (AccC) and two subunits each of ACCase subunit alpha (AccA) and ACCase subunit beta (AccD). It depends on Zn(2+) as a cofactor.

The protein localises to the cytoplasm. It catalyses the reaction N(6)-carboxybiotinyl-L-lysyl-[protein] + acetyl-CoA = N(6)-biotinyl-L-lysyl-[protein] + malonyl-CoA. The protein operates within lipid metabolism; malonyl-CoA biosynthesis; malonyl-CoA from acetyl-CoA: step 1/1. Component of the acetyl coenzyme A carboxylase (ACC) complex. Biotin carboxylase (BC) catalyzes the carboxylation of biotin on its carrier protein (BCCP) and then the CO(2) group is transferred by the transcarboxylase to acetyl-CoA to form malonyl-CoA. The sequence is that of Acetyl-coenzyme A carboxylase carboxyl transferase subunit beta from Staphylococcus epidermidis (strain ATCC 12228 / FDA PCI 1200).